The chain runs to 602 residues: Cholinesterase (602 aa).

The first 28 residues, Met-1–Thr-28, serve as a signal peptide directing secretion. 2 N-linked (GlcNAc...) (complex) asparagine glycosylation sites follow: Asn-45 and Asn-85. A disulfide bridge connects residues Cys-93 and Cys-120. A tacrine-binding site is contributed by Trp-110. Residue Asn-134 is glycosylated (N-linked (GlcNAc...) (complex) asparagine). Gly-144–Gly-145 lines the substrate pocket. The active-site Acyl-ester intermediate is Ser-226. Ser-226 carries the phosphoserine modification. N-linked (GlcNAc...) (complex) asparagine glycosylation is found at Asn-269 and Asn-284. A disulfide bridge links Cys-280 with Cys-291. Glu-353 functions as the Charge relay system in the catalytic mechanism. Asn-369 carries N-linked (GlcNAc...) (complex) asparagine glycosylation. Cys-428 and Cys-547 are joined by a disulfide. His-466 provides a ligand contact to tacrine. Catalysis depends on His-466, which acts as the Charge relay system. Asn-483 carries an N-linked (GlcNAc...) (complex) asparagine glycan. 3 N-linked (GlcNAc...) asparagine glycosylation sites follow: Asn-509, Asn-513, and Asn-514.

Belongs to the type-B carboxylesterase/lipase family. In terms of assembly, homotetramer; disulfide-linked. Dimer of dimers. In terms of processing, N-glycosylated. No other PTM detected. The major N-glycan structures are of the complex diantennary type with 1 and 2 N-acetylneuraminic acid molecules (Neu5Ac) making up approximately 33% and 47% of the total N-glycans, respectively. Only low amounts of fucosylated diantennary N-glycans are detected (approximately 2%). Triantennary N-glycans with or without fucose amount to approximately 13%, whereas 5% of the total N-glycans are of the oligomannosidic or hybrid type. In terms of tissue distribution, detected in blood plasma (at protein level). Present in most cells except erythrocytes.

The protein resides in the secreted. It catalyses the reaction an acylcholine + H2O = a carboxylate + choline + H(+). Its activity is regulated as follows. Inhibited by mercury. Inhibited by Tabun. Tabun forms a covalent adduct with Ser-226 that becomes irreversible upon aging. Functionally, esterase with broad substrate specificity. Contributes to the inactivation of the neurotransmitter acetylcholine. Can degrade neurotoxic organophosphate esters. This chain is Cholinesterase (BCHE), found in Homo sapiens (Human).